The following is a 311-amino-acid chain: Ceroid-lipofuscinosis neuronal protein 6 (311 aa).

7 helical membrane passes run 56-76, 81-101, 111-131, 179-199, 204-224, 225-245, and 260-280; these read WVLD…WFPL, VGDY…LKLI, SITY…LVGD, CMWY…CFTA, SLIP…YWYL, VTEG…LALV, and LFLF…VAWL.

Interacts with CRMP2. Interacts with CLN5. Interacts with CLN3.

It is found in the endoplasmic reticulum membrane. Its subcellular location is the endoplasmic reticulum. This Homo sapiens (Human) protein is Ceroid-lipofuscinosis neuronal protein 6 (CLN6).